A 314-amino-acid polypeptide reads, in one-letter code: 4-hydroxy-3-methylbut-2-enyl diphosphate reductase (314 aa).

Cysteine 12 contributes to the [4Fe-4S] cluster binding site. (2E)-4-hydroxy-3-methylbut-2-enyl diphosphate contacts are provided by histidine 41 and histidine 74. Dimethylallyl diphosphate is bound by residues histidine 41 and histidine 74. Isopentenyl diphosphate contacts are provided by histidine 41 and histidine 74. Cysteine 96 serves as a coordination point for [4Fe-4S] cluster. Histidine 124 is a (2E)-4-hydroxy-3-methylbut-2-enyl diphosphate binding site. Histidine 124 is a dimethylallyl diphosphate binding site. Histidine 124 lines the isopentenyl diphosphate pocket. Glutamate 126 functions as the Proton donor in the catalytic mechanism. (2E)-4-hydroxy-3-methylbut-2-enyl diphosphate is bound at residue threonine 167. Residue cysteine 197 coordinates [4Fe-4S] cluster. (2E)-4-hydroxy-3-methylbut-2-enyl diphosphate contacts are provided by serine 225, serine 226, asparagine 227, and serine 269. Positions 225, 226, 227, and 269 each coordinate dimethylallyl diphosphate. The isopentenyl diphosphate site is built by serine 225, serine 226, asparagine 227, and serine 269.

The protein belongs to the IspH family. [4Fe-4S] cluster is required as a cofactor.

The catalysed reaction is isopentenyl diphosphate + 2 oxidized [2Fe-2S]-[ferredoxin] + H2O = (2E)-4-hydroxy-3-methylbut-2-enyl diphosphate + 2 reduced [2Fe-2S]-[ferredoxin] + 2 H(+). The enzyme catalyses dimethylallyl diphosphate + 2 oxidized [2Fe-2S]-[ferredoxin] + H2O = (2E)-4-hydroxy-3-methylbut-2-enyl diphosphate + 2 reduced [2Fe-2S]-[ferredoxin] + 2 H(+). It functions in the pathway isoprenoid biosynthesis; dimethylallyl diphosphate biosynthesis; dimethylallyl diphosphate from (2E)-4-hydroxy-3-methylbutenyl diphosphate: step 1/1. It participates in isoprenoid biosynthesis; isopentenyl diphosphate biosynthesis via DXP pathway; isopentenyl diphosphate from 1-deoxy-D-xylulose 5-phosphate: step 6/6. In terms of biological role, catalyzes the conversion of 1-hydroxy-2-methyl-2-(E)-butenyl 4-diphosphate (HMBPP) into a mixture of isopentenyl diphosphate (IPP) and dimethylallyl diphosphate (DMAPP). Acts in the terminal step of the DOXP/MEP pathway for isoprenoid precursor biosynthesis. The chain is 4-hydroxy-3-methylbut-2-enyl diphosphate reductase from Haemophilus ducreyi (strain 35000HP / ATCC 700724).